A 226-amino-acid polypeptide reads, in one-letter code: Protein TRI1 (226 aa).

In terms of domain architecture, DEK-C spans 1–56 (MADINKYIPMVDAILSVSNPDEISPKRVRKALQILYSVNLDSQRKLINELILERFG). Positions 83-118 (QKEEERPLRSTRKRKGKSESKSKRKKKKNDSPDSNS) are disordered. A compositionally biased stretch (basic residues) spans 91 to 110 (RSTRKRKGKSESKSKRKKKK). Serine 113 carries the phosphoserine modification. The region spanning 119–195 (ISVRKVLLSA…NKLLTKHLFN (77 aa)) is the SWIB/MDM2 domain. Residues 200 to 218 (VKHEEEQKQTPEKEIKLEN) are compositionally biased toward basic and acidic residues. The interval 200–226 (VKHEEEQKQTPEKEIKLENESLPNLSG) is disordered. Residues lysine 201 and lysine 215 each participate in a glycyl lysine isopeptide (Lys-Gly) (interchain with G-Cter in SUMO) cross-link. Serine 225 is subject to Phosphoserine.

It is found in the cytoplasm. The protein localises to the nucleus. Its subcellular location is the nucleolus. Functionally, may be involved in transcription regulation. This Saccharomyces cerevisiae (strain ATCC 204508 / S288c) (Baker's yeast) protein is Protein TRI1 (TRI1).